Reading from the N-terminus, the 224-residue chain is Cell division protein SepF (224 aa).

Residues 21 to 78 are disordered; the sequence is DDYYEDDDRGPAPRGYRRPREDRFEDEGYAPRGYDGHPEDRRRDYDEPPAYRAGLAGG. The segment covering 54-66 has biased composition (basic and acidic residues); that stretch reads YDGHPEDRRRDYD.

This sequence belongs to the SepF family. In terms of assembly, homodimer. Interacts with FtsZ.

The protein resides in the cytoplasm. Its function is as follows. Cell division protein that is part of the divisome complex and is recruited early to the Z-ring. Probably stimulates Z-ring formation, perhaps through the cross-linking of FtsZ protofilaments. Its function overlaps with FtsA. The sequence is that of Cell division protein SepF from Mycolicibacterium gilvum (strain PYR-GCK) (Mycobacterium gilvum (strain PYR-GCK)).